The chain runs to 257 residues: Imidazole glycerol phosphate synthase subunit HisF (257 aa).

Catalysis depends on residues Asp-12 and Asp-131.

It belongs to the HisA/HisF family. Heterodimer of HisH and HisF.

It is found in the cytoplasm. The enzyme catalyses 5-[(5-phospho-1-deoxy-D-ribulos-1-ylimino)methylamino]-1-(5-phospho-beta-D-ribosyl)imidazole-4-carboxamide + L-glutamine = D-erythro-1-(imidazol-4-yl)glycerol 3-phosphate + 5-amino-1-(5-phospho-beta-D-ribosyl)imidazole-4-carboxamide + L-glutamate + H(+). It functions in the pathway amino-acid biosynthesis; L-histidine biosynthesis; L-histidine from 5-phospho-alpha-D-ribose 1-diphosphate: step 5/9. IGPS catalyzes the conversion of PRFAR and glutamine to IGP, AICAR and glutamate. The HisF subunit catalyzes the cyclization activity that produces IGP and AICAR from PRFAR using the ammonia provided by the HisH subunit. In Burkholderia thailandensis (strain ATCC 700388 / DSM 13276 / CCUG 48851 / CIP 106301 / E264), this protein is Imidazole glycerol phosphate synthase subunit HisF.